We begin with the raw amino-acid sequence, 361 residues long: Spermidine/putrescine import ATP-binding protein PotA (361 aa).

One can recognise an ABC transporter domain in the interval 4-234; it reads LEIKNVVKRF…PKNRFVADFL (231 aa). Position 36 to 43 (36 to 43) interacts with ATP; that stretch reads GPSGCGKT.

This sequence belongs to the ABC transporter superfamily. Spermidine/putrescine importer (TC 3.A.1.11.1) family. In terms of assembly, the complex is composed of two ATP-binding proteins (PotA), two transmembrane proteins (PotB and PotC) and a solute-binding protein (PotD).

The protein localises to the cell inner membrane. It carries out the reaction ATP + H2O + polyamine-[polyamine-binding protein]Side 1 = ADP + phosphate + polyamineSide 2 + [polyamine-binding protein]Side 1.. In terms of biological role, part of the ABC transporter complex PotABCD involved in spermidine/putrescine import. Responsible for energy coupling to the transport system. This is Spermidine/putrescine import ATP-binding protein PotA from Chromobacterium violaceum (strain ATCC 12472 / DSM 30191 / JCM 1249 / CCUG 213 / NBRC 12614 / NCIMB 9131 / NCTC 9757 / MK).